Consider the following 348-residue polypeptide: NADH-ubiquinone oxidoreductase chain 2 (348 aa).

Helical transmembrane passes span 13–33 (VITG…WAGL), 60–80 (FLAQ…NNLL), 96–116 (PLAM…HFWV), 124–144 (PLTS…SIMY), 150–170 (INTH…SWGG), 200–220 (TITT…FLTL), 241–261 (LMPL…LTGF), 278–298 (IIPT…MRLI), and 325–345 (LFIP…PLIL).

This sequence belongs to the complex I subunit 2 family. In terms of assembly, core subunit of respiratory chain NADH dehydrogenase (Complex I) which is composed of 45 different subunits. Interacts with TMEM242.

Its subcellular location is the mitochondrion inner membrane. The catalysed reaction is a ubiquinone + NADH + 5 H(+)(in) = a ubiquinol + NAD(+) + 4 H(+)(out). In terms of biological role, core subunit of the mitochondrial membrane respiratory chain NADH dehydrogenase (Complex I) which catalyzes electron transfer from NADH through the respiratory chain, using ubiquinone as an electron acceptor. Essential for the catalytic activity and assembly of complex I. This chain is NADH-ubiquinone oxidoreductase chain 2, found in Papio hamadryas (Hamadryas baboon).